The chain runs to 72 residues: Large ribosomal subunit protein bL31 (72 aa).

4 residues coordinate Zn(2+): Cys16, Cys18, Cys38, and Cys41.

This sequence belongs to the bacterial ribosomal protein bL31 family. Type A subfamily. As to quaternary structure, part of the 50S ribosomal subunit. Zn(2+) serves as cofactor.

In terms of biological role, binds the 23S rRNA. In Francisella tularensis subsp. holarctica (strain LVS), this protein is Large ribosomal subunit protein bL31.